The chain runs to 129 residues: Protein Turandot C (129 aa).

A signal peptide spans 1–21; that stretch reads MNASISLLCLALLLISPFCLG.

This sequence belongs to the Turandot family.

The protein resides in the secreted. In terms of biological role, a humoral factor that may play a role in stress tolerance. The protein is Protein Turandot C of Drosophila melanogaster (Fruit fly).